A 210-amino-acid polypeptide reads, in one-letter code: Na(+)-translocating NADH-quinone reductase subunit D (210 aa).

The next 6 membrane-spanning stretches (helical) occupy residues 42–62, 66–86, 103–123, 131–151, 154–174, and 178–198; these read VVMT…ISTI, IPNS…VIVV, VYVG…AFAM, FMDG…VGAF, LFGS…NGGW, and NGLL…IWAV.

It belongs to the NqrDE/RnfAE family. Composed of six subunits; NqrA, NqrB, NqrC, NqrD, NqrE and NqrF.

Its subcellular location is the cell inner membrane. It carries out the reaction a ubiquinone + n Na(+)(in) + NADH + H(+) = a ubiquinol + n Na(+)(out) + NAD(+). Functionally, NQR complex catalyzes the reduction of ubiquinone-1 to ubiquinol by two successive reactions, coupled with the transport of Na(+) ions from the cytoplasm to the periplasm. NqrA to NqrE are probably involved in the second step, the conversion of ubisemiquinone to ubiquinol. The protein is Na(+)-translocating NADH-quinone reductase subunit D of Psychromonas ingrahamii (strain DSM 17664 / CCUG 51855 / 37).